Here is a 179-residue protein sequence, read N- to C-terminus: Large ribosomal subunit protein uL5 (179 aa).

It belongs to the universal ribosomal protein uL5 family. As to quaternary structure, part of the 50S ribosomal subunit; part of the 5S rRNA/L5/L18/L25 subcomplex. Contacts the 5S rRNA and the P site tRNA. Forms a bridge to the 30S subunit in the 70S ribosome.

This is one of the proteins that bind and probably mediate the attachment of the 5S RNA into the large ribosomal subunit, where it forms part of the central protuberance. In the 70S ribosome it contacts protein S13 of the 30S subunit (bridge B1b), connecting the 2 subunits; this bridge is implicated in subunit movement. Contacts the P site tRNA; the 5S rRNA and some of its associated proteins might help stabilize positioning of ribosome-bound tRNAs. This Dechloromonas aromatica (strain RCB) protein is Large ribosomal subunit protein uL5.